Here is a 59-residue protein sequence, read N- to C-terminus: Cecropin-C type 2 (59 aa).

Positions 1–23 are cleaved as a signal peptide; it reads MNFAKVFVLVAMAVLLLVGQSEA.

This sequence belongs to the cecropin family.

It is found in the secreted. In terms of biological role, cecropins have lytic and antibacterial activity against several Gram-positive and Gram-negative bacteria. In Aedes albopictus (Asian tiger mosquito), this protein is Cecropin-C type 2 (CECC2).